The chain runs to 587 residues: 2-succinyl-5-enolpyruvyl-6-hydroxy-3-cyclohexene-1-carboxylate synthase (587 aa).

The protein belongs to the TPP enzyme family. MenD subfamily. As to quaternary structure, homodimer. It depends on Mg(2+) as a cofactor. Requires Mn(2+) as cofactor. Thiamine diphosphate serves as cofactor.

It catalyses the reaction isochorismate + 2-oxoglutarate + H(+) = 5-enolpyruvoyl-6-hydroxy-2-succinyl-cyclohex-3-ene-1-carboxylate + CO2. It participates in quinol/quinone metabolism; 1,4-dihydroxy-2-naphthoate biosynthesis; 1,4-dihydroxy-2-naphthoate from chorismate: step 2/7. The protein operates within cofactor biosynthesis; phylloquinone biosynthesis. Functionally, catalyzes the thiamine diphosphate-dependent decarboxylation of 2-oxoglutarate and the subsequent addition of the resulting succinic semialdehyde-thiamine pyrophosphate anion to isochorismate to yield 2-succinyl-5-enolpyruvyl-6-hydroxy-3-cyclohexene-1-carboxylate (SEPHCHC). The chain is 2-succinyl-5-enolpyruvyl-6-hydroxy-3-cyclohexene-1-carboxylate synthase from Prochlorococcus marinus (strain MIT 9301).